The following is a 640-amino-acid chain: ATP-dependent rRNA helicase spb4 (640 aa).

Residues 14-42 carry the Q motif motif; sequence WDAVTPALSEWVLEAMSSMGFTRMTPVQA. Residues 45 to 249 form the Helicase ATP-binding domain; that stretch reads IPLFMAHKDV…RVGLRNPVKV (205 aa). 58–65 provides a ligand contact to ATP; the sequence is AVTGSGKT. The DEAD box motif lies at 197–200; the sequence is DEAD. Positions 283–437 constitute a Helicase C-terminal domain; that stretch reads ALKRILSSVQ…LITFSDADAA (155 aa). The stretch at 521 to 629 forms a coiled coil; that stretch reads AYKDKQREKR…AAKAAGAKAD (109 aa). 2 disordered regions span residues 531 to 595 and 607 to 640; these read RKEL…EKQK and RKKN…QGFD. A compositionally biased stretch (basic residues) spans 568–582; sequence KKLKRREQKKSKHEK. Basic and acidic residues predominate over residues 583–595; the sequence is ARWEKMTEEEKQK. Positions 630 to 640 are enriched in acidic residues; it reads GDDEEEFQGFD.

Belongs to the DEAD box helicase family. DDX55/SPB4 subfamily. As to quaternary structure, component of pre-60S ribosomal complexes.

It is found in the nucleus. The protein localises to the nucleolus. The enzyme catalyses ATP + H2O = ADP + phosphate + H(+). Its function is as follows. ATP-binding RNA helicase involved in the biogenesis of 60S ribosomal subunits. Binds 90S pre-ribosomal particles and dissociates from pre-60S ribosomal particles after processing of 27SB pre-rRNA. Required for the normal formation of 18S rRNA through the processing of pre-rRNAs at sites A0, A1 and A2, and the normal formation of 25S and 5.8S rRNAs through the processing of pre-rRNAs at sites C1 and C2. This Neosartorya fischeri (strain ATCC 1020 / DSM 3700 / CBS 544.65 / FGSC A1164 / JCM 1740 / NRRL 181 / WB 181) (Aspergillus fischerianus) protein is ATP-dependent rRNA helicase spb4.